The primary structure comprises 918 residues: Interleukin-6 receptor subunit beta (918 aa).

The N-terminal stretch at 1 to 22 is a signal peptide; sequence MLTLQTWLVQALFIFLTTESTG. The Extracellular portion of the chain corresponds to 23–619; sequence ELLDPCGYIS…TPKFAQGEIE (597 aa). Residues 26-120 form the Ig-like C2-type domain; the sequence is DPCGYISPES…LEQNVYGITI (95 aa). Intrachain disulfides connect cysteine 28–cysteine 54 and cysteine 48–cysteine 103. 3 N-linked (GlcNAc...) asparagine glycosylation sites follow: asparagine 43, asparagine 83, and asparagine 131. Fibronectin type-III domains lie at 125–216, 224–324, 329–424, 426–517, and 518–613; these read PPEK…NFDP, PPHN…TYED, APSF…FQAT, PVMD…LKQA, and PPSK…TPKF. Cysteine 134 and cysteine 144 form a disulfide bridge. Residue asparagine 157 is glycosylated (N-linked (GlcNAc...) asparagine). Cysteines 172 and 182 form a disulfide. Asparagine 227 carries N-linked (GlcNAc...) asparagine glycosylation. The WSXWS motif signature appears at 310-314; sequence WSDWS. N-linked (GlcNAc...) asparagine glycosylation is found at asparagine 379 and asparagine 383. Asparagine 390 carries N-linked (GlcNAc...) (complex) asparagine glycosylation. Cysteine 458 and cysteine 466 are joined by a disulfide. Residues asparagine 553 and asparagine 564 are each glycosylated (N-linked (GlcNAc...) asparagine). A helical membrane pass occupies residues 620–641; the sequence is AIVVPVCLAFLLTTLLGVLFCF. At 642–918 the chain is on the cytoplasmic side; sequence NKRDLIKKHI…TVRQGGYMPQ (277 aa). Residues 651 to 659 carry the Box 1 motif motif; sequence IWPNVPDPS. 2 disordered regions span residues 660 to 681 and 722 to 758; these read KSHI…SKDQ and EGHS…STVQ. Serine 661 and serine 667 each carry phosphoserine. The segment covering 731 to 755 has biased composition (low complexity); the sequence is SSCMSSSRPSISSSDENESSQNTSS. Phosphoserine is present on residues serine 782, serine 789, serine 829, and serine 839.

It belongs to the type I cytokine receptor family. Type 2 subfamily. Component of a hexamer of two molecules each of IL6, IL6R and IL6ST; associates with the complex IL6:IL6R but does not interact with IL6. Forms heterodimers composed of LIFR and IL6ST (type I OSM receptor) which are activated by LIF and OSM. Also forms heterodimers composed of OSMR and IL6ST (type II receptor) which are activated by OSM but not by LIF. Component of a receptor complex composed of IL6ST/GP130, IL27RA/WSX1 and CNTFR which interacts with the neuroprotective peptide humanin. Interacts with HCK. Interacts with INPP5D/SHIP1. Interacts with SRC and YES. Interacts with ARMH4; this interaction prevents IL6ST protein homodimerization and bridges ARMH4 with IL6R and STAT3 and therefore inhibits phosphorylation of STAT3 at 'Tyr-705'. As to quaternary structure, (Microbial infection) The homodimer binds two molecules of herpes virus 8/HHV-8 protein vIL-6. In terms of processing, phosphorylation of Ser-782 down-regulates cell surface expression. Heavily N-glycosylated. Glycosylation is required for protein stability and localization in plasma membrane but not for ligand binding. As to expression, found in all the tissues and cell lines examined. Expression not restricted to IL6 responsive cells. Expressed in blood serum (at protein level).

It localises to the cell membrane. The protein resides in the secreted. Its function is as follows. Signal-transducing molecule. The receptor systems for IL6, LIF, OSM, CNTF, IL11, CTF1 and BSF3 can utilize IL6ST for initiating signal transmission. Binding of IL6 to IL6R induces IL6ST homodimerization and formation of a high-affinity receptor complex, which activates the intracellular JAK-MAPK and JAK-STAT3 signaling pathways. That causes phosphorylation of IL6ST tyrosine residues which in turn activates STAT3. In parallel, the IL6 signaling pathway induces the expression of two cytokine receptor signaling inhibitors, SOCS1 and SOCS3, which inhibit JAK and terminate the activity of the IL6 signaling pathway as a negative feedback loop. Also activates the yes-associated protein 1 (YAP) and NOTCH pathways to control inflammation-induced epithelial regeneration, independently of STAT3. Acts as a receptor for the neuroprotective peptide humanin as part of a complex with IL27RA/WSX1 and CNTFR. Mediates signals which regulate immune response, hematopoiesis, pain control and bone metabolism. Has a role in embryonic development. Essential for survival of motor and sensory neurons and for differentiation of astrocytes. Required for expression of TRPA1 in nociceptive neurons. Required for the maintenance of PTH1R expression in the osteoblast lineage and for the stimulation of PTH-induced osteoblast differentiation. Required for normal trabecular bone mass and cortical bone composition. In terms of biological role, binds to the soluble IL6:sIL6R complex (hyper-IL6), thereby blocking IL6 trans-signaling. Inhibits sIL6R-dependent acute phase response. Also blocks IL11 cluster signaling through IL11R. The protein is Interleukin-6 receptor subunit beta of Homo sapiens (Human).